Here is a 767-residue protein sequence, read N- to C-terminus: ABC transporter B family member 4 (767 aa).

The disordered stretch occupies residues 81–104; sequence NYSSSSNSGNNNNNNYNNKNNNNN. A run of 5 helical transmembrane segments spans residues 208-228, 252-272, 324-344, 350-370, and 429-449; these read IWLF…GLQI, AIFI…MISV, VSLG…LILI, LGMM…AGWL, and IGIF…LVYW. An ABC transmembrane type-1 domain is found at 211–491; sequence FGFGIITAFF…LSILFTQIMS (281 aa). Residues 524-760 form the ABC transporter domain; sequence IKFINVDFKY…KGLYYKLVQR (237 aa). 559–566 lines the ATP pocket; that stretch reads GSSGGGKS.

It belongs to the ABC transporter superfamily. ABCB family. Multidrug resistance exporter (TC 3.A.1.201) subfamily.

The protein localises to the membrane. This chain is ABC transporter B family member 4 (abcB4), found in Dictyostelium discoideum (Social amoeba).